Reading from the N-terminus, the 264-residue chain is Merozoite surface protein 2 (264 aa).

The N-terminal stretch at 1 to 20 is a signal peptide; it reads MKVIKTLSIINFFIFVTFNI. Residues asparagine 22 and asparagine 36 are each glycosylated (N-linked (GlcNAc...) asparagine). The interval 44–190 is polymorphic region; the sequence is ANEGSNTNSV…PQTAENENPA (147 aa). Positions 46–227 are disordered; it reads EGSNTNSVGA…QKECTDGNKE (182 aa). 2 tandem repeats follow at residues 60–91 and 92–123. Positions 60-123 are 2 X 32 AA perfects repeats; sequence ADTIASGSQR…GESQTTTPTA (64 aa). Residues 70–81 show a composition bias toward low complexity; it reads STNSASTSTTNN. Residues 82–101 are compositionally biased toward polar residues; the sequence is GESQTTTPTAADTIASGSQR. Residues 102-145 are compositionally biased toward low complexity; the sequence is STNSASTSTTNNGESQTTTPTAADTPTATESISPSPPITTTESS. The segment covering 154-166 has biased composition (basic and acidic residues); it reads TDGKGEESEKQNE. Residue asparagine 213 is glycosylated (N-linked (GlcNAc...) asparagine). Basic and acidic residues predominate over residues 217-226; that stretch reads SQKECTDGNK. An intrachain disulfide couples cysteine 221 to cysteine 229. Asparagine 238 is a glycosylation site (N-linked (GlcNAc...) asparagine). Asparagine 238 is lipidated: GPI-anchor amidated asparagine. Residues 239–264 constitute a propeptide, removed in mature form; the sequence is SSNIASINKFVVLISATLVLSFAIFI.

It localises to the cell membrane. May play a role in the merozoite attachment to the erythrocyte. The protein is Merozoite surface protein 2 of Plasmodium falciparum (isolate FC27 / Papua New Guinea).